The sequence spans 529 residues: Variant surface glycoprotein MITAT 1.6 (529 aa).

Residues 1–24 (MAVHRALAAYAISLYVLLPRKSGA) form the signal peptide. Cystine bridges form between cysteine 39–cysteine 170 and cysteine 147–cysteine 214. The N-linked (GlcNAc...) (high mannose) asparagine glycan is linked to asparagine 456. A lipid anchor (GPI-anchor amidated aspartate) is attached at aspartate 506. The propeptide at 507-529 (SSILVTKKFALTVVSAAFVALLF) is removed in mature form.

Post-translationally, N-glycosylated; glycan is composed of 6 to 9 mannose residues.

The protein resides in the cell membrane. In terms of biological role, VSG forms a coat on the surface of the parasite. The trypanosome evades the immune response of the host by expressing a series of antigenically distinct VSGs from an estimated 1000 VSG genes. The chain is Variant surface glycoprotein MITAT 1.6 from Trypanosoma brucei brucei.